The chain runs to 625 residues: Probable potassium transport system protein Kup (625 aa).

The next 12 helical transmembrane spans lie at 13–33 (TALAALGVVFGDIGTSPLYAL), 53–73 (ILSIIFWCLMLIISIKYVAIV), 103–123 (IYMIAIGFIGASLFFGDGIIT), 141–161 (VFDPFIMPIAIAIIVTLFLVQ), 172–192 (FGPITLVWFLSLGILGIHSVI), 206–226 (AIQFIYHHPIMTFFVMGAVVL), 250–270 (WFFVVLPCLVLNYAGQGALLL), 282–302 (LLVPQWALYPMIIMATMATVI), 340–360 (IYVPFLNWLLLIAIIILILIF), 369–389 (AYGLAVTLTMLCDTILVAVFI), 400–420 (VLLLIIPFFILESVLVGATSL), and 422–442 (ILSGGWVPLLIGAIAVTILMT).

It belongs to the HAK/KUP transporter (TC 2.A.72) family.

The protein resides in the cell inner membrane. It catalyses the reaction K(+)(in) + H(+)(in) = K(+)(out) + H(+)(out). Functionally, transport of potassium into the cell. Likely operates as a K(+):H(+) symporter. The protein is Probable potassium transport system protein Kup of Acinetobacter baumannii (strain ACICU).